Here is a 478-residue protein sequence, read N- to C-terminus: UDP-N-acetylmuramate--L-alanine ligase (478 aa).

Position 126-132 (126-132 (GTHGKTT)) interacts with ATP.

This sequence belongs to the MurCDEF family.

Its subcellular location is the cytoplasm. The enzyme catalyses UDP-N-acetyl-alpha-D-muramate + L-alanine + ATP = UDP-N-acetyl-alpha-D-muramoyl-L-alanine + ADP + phosphate + H(+). Its pathway is cell wall biogenesis; peptidoglycan biosynthesis. Its function is as follows. Cell wall formation. This is UDP-N-acetylmuramate--L-alanine ligase from Synechococcus sp. (strain JA-2-3B'a(2-13)) (Cyanobacteria bacterium Yellowstone B-Prime).